The following is a 235-amino-acid chain: Uridylate kinase (235 aa).

10 to 11 serves as a coordination point for ATP; sequence GS. UMP is bound at residue Gly45. 2 residues coordinate ATP: Gly46 and Arg50. UMP contacts are provided by residues Asp67 and 115–121; that span reads VTPGQTT. Positions 141, 147, and 150 each coordinate ATP.

It belongs to the UMP kinase family. In terms of assembly, homohexamer.

It localises to the cytoplasm. The enzyme catalyses UMP + ATP = UDP + ADP. The protein operates within pyrimidine metabolism; CTP biosynthesis via de novo pathway; UDP from UMP (UMPK route): step 1/1. Its activity is regulated as follows. Inhibited by UTP. In terms of biological role, catalyzes the reversible phosphorylation of UMP to UDP. The protein is Uridylate kinase of Methanocorpusculum labreanum (strain ATCC 43576 / DSM 4855 / Z).